The primary structure comprises 403 residues: Acetylornithine/succinyldiaminopimelate aminotransferase (403 aa).

Residues 107-108 (GA) and F140 each bind pyridoxal 5'-phosphate. A N(2)-acetyl-L-ornithine-binding site is contributed by R143. Position 225–228 (225–228 (DEVQ)) interacts with pyridoxal 5'-phosphate. N6-(pyridoxal phosphate)lysine is present on K254. T282 contributes to the N(2)-acetyl-L-ornithine binding site. T283 lines the pyridoxal 5'-phosphate pocket.

The protein belongs to the class-III pyridoxal-phosphate-dependent aminotransferase family. ArgD subfamily. In terms of assembly, homodimer. Pyridoxal 5'-phosphate serves as cofactor.

Its subcellular location is the cytoplasm. The enzyme catalyses N(2)-acetyl-L-ornithine + 2-oxoglutarate = N-acetyl-L-glutamate 5-semialdehyde + L-glutamate. The catalysed reaction is N-succinyl-(2S,6S)-2,6-diaminopimelate + 2-oxoglutarate = (S)-2-succinylamino-6-oxoheptanedioate + L-glutamate. The protein operates within amino-acid biosynthesis; L-arginine biosynthesis; N(2)-acetyl-L-ornithine from L-glutamate: step 4/4. It functions in the pathway amino-acid biosynthesis; L-lysine biosynthesis via DAP pathway; LL-2,6-diaminopimelate from (S)-tetrahydrodipicolinate (succinylase route): step 2/3. Functionally, involved in both the arginine and lysine biosynthetic pathways. The sequence is that of Acetylornithine/succinyldiaminopimelate aminotransferase from Photorhabdus laumondii subsp. laumondii (strain DSM 15139 / CIP 105565 / TT01) (Photorhabdus luminescens subsp. laumondii).